Consider the following 367-residue polypeptide: Peptide chain release factor 2 (367 aa).

Position 254 is an N5-methylglutamine (Gln-254).

This sequence belongs to the prokaryotic/mitochondrial release factor family. Methylated by PrmC. Methylation increases the termination efficiency of RF2.

It localises to the cytoplasm. Functionally, peptide chain release factor 2 directs the termination of translation in response to the peptide chain termination codons UGA and UAA. This chain is Peptide chain release factor 2, found in Bordetella avium (strain 197N).